A 341-amino-acid chain; its full sequence is Cyclin-Y (341 aa).

Gly2 carries the N-myristoyl glycine lipid modification. Phosphoserine is present on residues Ser21 and Ser25. A Phosphothreonine modification is found at Thr30. Ser33 is subject to Phosphoserine. Position 37 is a phosphothreonine (Thr37). The residue at position 67 (Thr67) is a Phosphothreonine; by CDK14. A phosphoserine; by CDK14 mark is found at Ser71 and Ser73. Thr75 is modified (phosphothreonine). At Ser83 the chain carries Phosphoserine; by CDK14. Ser99, Ser100, and Ser102 each carry phosphoserine. Residues 143–265 (DIFDENLHPL…FLELLQFNIN (123 aa)) form the Cyclin N-terminal domain. Ser280 is subject to Phosphoserine. Ser288 and Ser295 each carry phosphoserine; by CDK14. 2 positions are modified to phosphoserine: Ser324 and Ser326. At Thr331 the chain carries Phosphothreonine.

It belongs to the cyclin family. Cyclin Y subfamily. In terms of assembly, found in a complex with CAPRIN2, LRP6 and CDK14 during G2/M stage; CAPRIN2 functions as a scaffold for the complex by binding to CCNY via its N terminus and to CDK14 via its C terminus. Interacts with CDK14. Interacts with CDK16. Interacts with LRP6. Post-translationally, ubiquitinated; leading to its degradation. In terms of processing, heavily phosphorylated. Phosphorylation at Ser-71 and Ser-73 by CDK14 is enhanced during the G2 and M cell cycle phases, and creates a phosphodegron triggering SCF-dependent ubiquitination. Widely expressed.

Its subcellular location is the cell membrane. It is found in the nucleus. Its function is as follows. Positive regulatory subunit of the cyclin-dependent kinases CDK14/PFTK1 and CDK16. Acts as a cell-cycle regulator of Wnt signaling pathway during G2/M phase by recruiting CDK14/PFTK1 to the plasma membrane and promoting phosphorylation of LRP6, leading to the activation of the Wnt signaling pathway. Recruits CDK16 to the plasma membrane. Isoform 3 might play a role in the activation of MYC-mediated transcription. This chain is Cyclin-Y (CCNY), found in Homo sapiens (Human).